The primary structure comprises 411 residues: L-cysteine:1D-myo-inositol 2-amino-2-deoxy-alpha-D-glucopyranoside ligase (411 aa).

Residue Cys43 participates in Zn(2+) binding. L-cysteinyl-5'-AMP is bound by residues Cys43–Thr46, Thr58, and Asn81–Thr83. A 'HIGH' region motif is present at residues Ile45 to His55. The short motif at Gln186–Pro191 is the 'ERGGDP' region element. Trp226 contributes to the L-cysteinyl-5'-AMP binding site. Cys230 contributes to the Zn(2+) binding site. Residue Gly248–Asp250 participates in L-cysteinyl-5'-AMP binding. His255 is a Zn(2+) binding site. Residue Ile282 participates in L-cysteinyl-5'-AMP binding. The 'KMSKS' region motif lies at Lys288 to Ser292.

Belongs to the class-I aminoacyl-tRNA synthetase family. MshC subfamily. As to quaternary structure, monomer. Zn(2+) is required as a cofactor.

It catalyses the reaction 1D-myo-inositol 2-amino-2-deoxy-alpha-D-glucopyranoside + L-cysteine + ATP = 1D-myo-inositol 2-(L-cysteinylamino)-2-deoxy-alpha-D-glucopyranoside + AMP + diphosphate + H(+). Its function is as follows. Catalyzes the ATP-dependent condensation of GlcN-Ins and L-cysteine to form L-Cys-GlcN-Ins. The protein is L-cysteine:1D-myo-inositol 2-amino-2-deoxy-alpha-D-glucopyranoside ligase of Mycobacterium ulcerans (strain Agy99).